A 966-amino-acid chain; its full sequence is Muscular LMNA-interacting protein (966 aa).

The residue at position 129 (Ser129) is a Phosphoserine. Disordered regions lie at residues 132–154 (EDEATCRQGEQGPPGATGNIATR), 182–207 (SHPEIPHGIAPQQKHGQLTSPTTSEQ), 303–337 (LAPEAQKKVSTSSALNPREDVRTSPSPASGASLRS), 354–388 (PSPKPLTSSSHGSLSTVCSQTSSSGNLSKSGLKSP), 434–562 (IKQT…TRPS), 597–684 (KRTC…TPSL), 785–837 (SMHS…SQLT), and 929–966 (SLRDEQEKSPTLLSQDTYNKPGHPMVTIPEHDTLDSKE). Residues 144 to 810 (PPGATGNIAT…GSETIKTPTT (667 aa)) are required for interaction with ISL1. Composition is skewed to polar residues over residues 195–207 (KHGQLTSPTTSEQ) and 325–337 (TSPSPASGASLRS). Low complexity-rich tracts occupy residues 354–387 (PSPKPLTSSSHGSLSTVCSQTSSSGNLSKSGLKS), 437–455 (TPSTPKKSLSSCSLTTGST), and 478–497 (PLSQAQPPSPPALASSSYAA). The residue at position 486 (Ser486) is a Phosphoserine. A compositionally biased stretch (polar residues) spans 507–521 (TLRSSTTPPQSQTDL). 2 stretches are compositionally biased toward basic and acidic residues: residues 542–555 (GRKDGDLRAPEKNR) and 597–607 (KRTCSQRHSDQ). 2 stretches are compositionally biased toward polar residues: residues 639-649 (SSLTQALQRSP) and 657-684 (GSATCPSRTGMPDSTASNRSSRVSTPSL). Residues 785–797 (SMHSSDSPSRPSQ) are compositionally biased toward low complexity. Phosphoserine is present on Ser791. Residues 798-810 (TMLGSETIKTPTT) are compositionally biased toward polar residues. A compositionally biased stretch (low complexity) spans 825–834 (SSSSSTTSES). The segment covering 937-946 (SPTLLSQDTY) has biased composition (polar residues). The span at 957 to 966 (PEHDTLDSKE) shows a compositional bias: basic and acidic residues.

Directly interacts with LMNA. Interacts with ISL1 (via N-terminal domain); the interaction represses ISL1 transactivator activity. Interactions of ISL1 with MLIP1 and GCN5/KAT2A may be mutually exclusive. As to expression, expressed in cardiomyoctes. Expression is highly reduced in hypertrophic cardiomyocytes.

Its subcellular location is the nucleus. The protein localises to the nucleus envelope. It is found in the PML body. It localises to the cytoplasm. The protein resides in the cytosol. Its subcellular location is the cell membrane. The protein localises to the sarcolemma. In terms of biological role, required for myoblast differentiation into myotubes, possibly acting as a transcriptional regulator of the myogenic program. Required for cardiac adaptation to stress through integrated regulation of the AKT/mTOR pathways and FOXO1. Regulates cardiac homeostasis and plays a role in the protection against cardiac hypertrophy. Binds chromatin. May act as a transcriptional cofactor for ISL1, repressing its transcriptional activity. May also repress MYOCD transcriptional activity. This chain is Muscular LMNA-interacting protein, found in Rattus norvegicus (Rat).